The chain runs to 511 residues: Arginine-containing cyclodipeptide synthase eshA (511 aa).

The short motif at 413–417 is the Conserved DDXXE motif element; that stretch reads DDSAE.

The protein belongs to the arginine-containing cyclodipeptide synthase family.

The enzyme catalyses L-arginyl-tRNA(Arg) + L-leucyl-tRNA(Leu) = cyclo(L-arginyl-L-leucyl) + tRNA(Arg) + tRNA(Leu) + 2 H(+). Its pathway is secondary metabolite biosynthesis. Functionally, arginine-containing cyclodipeptide synthase; part of the cluster that mediates the biosynthesis of a highly modified cyclo-arginine-leucine dipeptide (cRW). Within the pathway, eshA acts as the scaffold-generating enzyme and is responsible for formation of the cyclo-Arg-Leu diketopiperazine (cRL) from L-arginyl-tRNA(Arg) + L-Leucyl-tRNA(Leu). Additional enzymes from the cluster then further modify the cyclo-Arg-Leu diketopiperazine (cRW) scaffold. In Penicillium shearii (Eupenicillium shearii), this protein is Arginine-containing cyclodipeptide synthase eshA.